A 221-amino-acid polypeptide reads, in one-letter code: Transcription factor HES-4 (221 aa).

Over residues 1 to 22 the composition is skewed to low complexity; it reads MAADTPGKPSASPMAGAPASAS. The segment at 1–49 is disordered; that stretch reads MAADTPGKPSASPMAGAPASASRTPDKPRSAAEHRKSSKPVMEKRRRAR. Positions 24-35 are enriched in basic and acidic residues; the sequence is TPDKPRSAAEHR. In terms of domain architecture, bHLH spans 34–91; it reads HRKSSKPVMEKRRRARINESLAQLKTLILDALRKESSRHSKLEKADILEMTVRHLRSL. Residues 110-143 enclose the Orange domain; that stretch reads YRAGFHECLAEVNRFLAGCEGVPADVRSRLLGHL. The segment at 201 to 221 is disordered; it reads LPAAPRAGPQGPGGPWRPWLR. The short motif at 216 to 219 is the WRPW motif element; that stretch reads WRPW.

As to quaternary structure, transcription repression requires formation of a complex with a corepressor protein of the Groucho/TLE family.

It is found in the nucleus. Transcriptional repressor. Binds DNA on N-box motifs: 5'-CACNAG-3'. This is Transcription factor HES-4 (HES4) from Homo sapiens (Human).